A 435-amino-acid polypeptide reads, in one-letter code: 3-phosphoshikimate 1-carboxyvinyltransferase (435 aa).

3 residues coordinate 3-phosphoshikimate: lysine 15, serine 16, and arginine 20. Lysine 15 contributes to the phosphoenolpyruvate binding site. The phosphoenolpyruvate site is built by glycine 96 and arginine 124. 3-phosphoshikimate contacts are provided by serine 169, glutamine 171, threonine 195, aspartate 319, and lysine 346. Glutamine 171 contacts phosphoenolpyruvate. Aspartate 319 (proton acceptor) is an active-site residue. Residues arginine 350 and arginine 394 each contribute to the phosphoenolpyruvate site.

This sequence belongs to the EPSP synthase family. In terms of assembly, monomer.

Its subcellular location is the cytoplasm. It catalyses the reaction 3-phosphoshikimate + phosphoenolpyruvate = 5-O-(1-carboxyvinyl)-3-phosphoshikimate + phosphate. Its pathway is metabolic intermediate biosynthesis; chorismate biosynthesis; chorismate from D-erythrose 4-phosphate and phosphoenolpyruvate: step 6/7. In terms of biological role, catalyzes the transfer of the enolpyruvyl moiety of phosphoenolpyruvate (PEP) to the 5-hydroxyl of shikimate-3-phosphate (S3P) to produce enolpyruvyl shikimate-3-phosphate and inorganic phosphate. The polypeptide is 3-phosphoshikimate 1-carboxyvinyltransferase (Chloroherpeton thalassium (strain ATCC 35110 / GB-78)).